The chain runs to 204 residues: tRNA (pseudouridine(54)-N(1))-methyltransferase (204 aa).

S-adenosyl-L-methionine contacts are provided by residues leucine 130, glycine 157, 180–185 (LSPLEL), and cysteine 190.

Belongs to the methyltransferase superfamily. TrmY family. As to quaternary structure, homodimer.

The protein localises to the cytoplasm. The catalysed reaction is pseudouridine(54) in tRNA + S-adenosyl-L-methionine = N(1)-methylpseudouridine(54) in tRNA + S-adenosyl-L-homocysteine + H(+). Its function is as follows. Specifically catalyzes the N1-methylation of pseudouridine at position 54 (Psi54) in tRNAs. This chain is tRNA (pseudouridine(54)-N(1))-methyltransferase, found in Methanococcus aeolicus (strain ATCC BAA-1280 / DSM 17508 / OCM 812 / Nankai-3).